The primary structure comprises 227 residues: Endolytic peptidoglycan transglycosylase RlpA (227 aa).

Residues 1–21 (MMNHKFVLLILLIFYCFFLSG) form the signal peptide. A lipid anchor (N-palmitoyl cysteine) is attached at Cys-22. Cys-22 carries S-diacylglycerol cysteine lipidation.

The protein belongs to the RlpA family.

It localises to the cell membrane. Functionally, lytic transglycosylase with a strong preference for naked glycan strands that lack stem peptides. This is Endolytic peptidoglycan transglycosylase RlpA from Rickettsia bellii (strain RML369-C).